A 247-amino-acid polypeptide reads, in one-letter code: Orotidine 5'-phosphate decarboxylase (247 aa).

Residues aspartate 22, lysine 44, aspartate 71–threonine 80, threonine 131, arginine 192, glutamine 201, glycine 221, and arginine 222 each bind substrate. The active-site Proton donor is lysine 73.

This sequence belongs to the OMP decarboxylase family. Type 1 subfamily. Homodimer.

The enzyme catalyses orotidine 5'-phosphate + H(+) = UMP + CO2. It participates in pyrimidine metabolism; UMP biosynthesis via de novo pathway; UMP from orotate: step 2/2. Catalyzes the decarboxylation of orotidine 5'-monophosphate (OMP) to uridine 5'-monophosphate (UMP). This Pectobacterium carotovorum subsp. carotovorum (strain PC1) protein is Orotidine 5'-phosphate decarboxylase.